Reading from the N-terminus, the 295-residue chain is Diaminopimelate epimerase (295 aa).

Asparagine 13, glutamine 46, and asparagine 66 together coordinate substrate. Cysteine 75 acts as the Proton donor in catalysis. Substrate is bound by residues 76–77 (GN), asparagine 162, asparagine 195, and 213–214 (ER). Cysteine 222 (proton acceptor) is an active-site residue. 223 to 224 (GT) provides a ligand contact to substrate.

This sequence belongs to the diaminopimelate epimerase family. In terms of assembly, homodimer.

The protein resides in the cytoplasm. It carries out the reaction (2S,6S)-2,6-diaminopimelate = meso-2,6-diaminopimelate. Its pathway is amino-acid biosynthesis; L-lysine biosynthesis via DAP pathway; DL-2,6-diaminopimelate from LL-2,6-diaminopimelate: step 1/1. Catalyzes the stereoinversion of LL-2,6-diaminopimelate (L,L-DAP) to meso-diaminopimelate (meso-DAP), a precursor of L-lysine and an essential component of the bacterial peptidoglycan. The polypeptide is Diaminopimelate epimerase (Psychrobacter cryohalolentis (strain ATCC BAA-1226 / DSM 17306 / VKM B-2378 / K5)).